Reading from the N-terminus, the 64-residue chain is Large ribosomal subunit protein bL35 (64 aa).

The span at 1 to 15 (MPKNKTHSGTAKRFR) shows a compositional bias: basic residues. Residues 1–27 (MPKNKTHSGTAKRFRVTGSGKLRREQA) are disordered.

The protein belongs to the bacterial ribosomal protein bL35 family.

This is Large ribosomal subunit protein bL35 from Saccharopolyspora erythraea (strain ATCC 11635 / DSM 40517 / JCM 4748 / NBRC 13426 / NCIMB 8594 / NRRL 2338).